We begin with the raw amino-acid sequence, 514 residues long: MKEYQIHLELDRSQQHNFLYPLLFREYIYALAHDHGLNRSTIPLENGGYDNKSSSLSVKRLISRTYQRIHLSIYAKDSNPNHFIGHNNKFYSQMISEGFSVIVEIPFSLRLVAFLEGKEKEMAKSHNFQSIHSIFPFFENNFSHLHYVLDVLIPYPIRPEILVRTFRYWVKDASSFHLLRFFLHEYFNLNSLITPKKSNSIFSTSNPRFFLFLYNSHVYEYESIFFFLRNQSSHLRSTSSGPLFERISFYGKVEDLVQVFVNDFQDYLWLFKHPIMHYVRYQGKSVLASKDMPLLMNKWKYYLVNLWQWHFHVWSQPGRIHINHLYKDYIDFLGYLSRGRLNTLVVRSQMLENAFLIDNAMKQFETTVPIIPLIGSLTTARFCNSLGHPISKPTWADSSDSYIIDRFMRICRNLSHYHSGSSKKKSLYRIKYILRVSCVKSLVRKHKSTVRVFLKRLGSEFLEEFFTEEEHVLSLIFPRALFTSRRLYRGRVWYFDIICINDLVNHDKLEIVPN.

This sequence belongs to the intron maturase 2 family. MatK subfamily.

The protein resides in the plastid. It is found in the chloroplast. Usually encoded in the trnK tRNA gene intron. Probably assists in splicing its own and other chloroplast group II introns. This Acer monspessulanum (Montpellier maple) protein is Maturase K.